Consider the following 997-residue polypeptide: Protein argonaute 5 (997 aa).

Composition is skewed to gly residues over residues 1–16 and 43–59; these read MSNR…SRGR and GGRG…GNVG. The disordered stretch occupies residues 1-144; it reads MSNRGGGGHG…TSLPPASSKA (144 aa). The span at 93 to 106 shows a compositional bias: low complexity; the sequence is SVASSSKTVSVASS. Positions 116–129 are enriched in polar residues; sequence VSETMSNLQITSTE. The 112-residue stretch at 360-471 folds into the PAZ domain; sequence VVTDFISKFL…LPMELCQIDE (112 aa). In terms of domain architecture, Piwi spans 638–958; that stretch reads LLIVILPDVT…AAFRARYYME (321 aa). Residues aspartate 721 and aspartate 807 each coordinate a divalent metal cation. Interaction with guide RNA regions lie at residues 847-848, 893-901, and 930-952; these read KR, HAGIQGTSR, and YARC…AAFR. Histidine 947 contacts a divalent metal cation.

It belongs to the argonaute family. Ago subfamily. The cofactor is Mg(2+). Requires Mn(2+) as cofactor.

Involved in RNA-mediated post-transcriptional gene silencing (PTGS). Main component of the RNA-induced silencing complex (RISC) that binds to a short guide RNA such as a microRNA (miRNA) or small interfering RNA (siRNA). RISC uses the mature miRNA or siRNA as a guide for slicer-directed cleavage of homologous mRNAs to repress gene expression. Associates with siRNAs of various sizes, from 21-24 nucleotide in length and preferentially recruits small RNAs with a 5' terminal cytosine. Probably involved in antiviral RNA silencing. Associates with siRNAs derived from cucumber mosaic virus (CMV). Targeted by the turnip yellows virus (TuYV) protein P0 (via F-box-like domain) for probable proteasome degradation and thereby inactivating AGO5 function in RNA silencing. The protein is Protein argonaute 5 (AGO5) of Arabidopsis thaliana (Mouse-ear cress).